The chain runs to 167 residues: Neutrophilic granule protein (167 aa).

Positions methionine 1–alanine 21 are cleaved as a signal peptide. The segment at glutamate 122–phenylalanine 141 is disordered.

Belongs to the cathelicidin family. As to quaternary structure, monomer. Homodimer; disulfide-linked. Expressed in myeloid bone marrow cells. Expressed in neutrophilic precursors (at protein level). Expressed in myeloid bone marrow cells.

Its subcellular location is the secreted. It localises to the cytoplasmic granule. Functionally, acts as an inhibitor of cathepsin B (CTSB) activity. Plays a role as a negative regulator of tumor vascular development, cell invasion and metastasis. This Mus musculus (Mouse) protein is Neutrophilic granule protein.